The chain runs to 508 residues: Potassium/proton antiporter CemA (508 aa).

The next 5 membrane-spanning stretches (helical) occupy residues 66 to 86, 282 to 302, 386 to 406, 433 to 453, and 468 to 488; these read LFII…LNLL, YQAL…WIIS, ILHL…FILG, ILLL…EVVI, and IISC…KYWI.

This sequence belongs to the CemA family.

The protein resides in the plastid. Its subcellular location is the chloroplast inner membrane. It catalyses the reaction K(+)(in) + H(+)(out) = K(+)(out) + H(+)(in). Contributes to K(+)/H(+) antiport activity by supporting proton efflux to control proton extrusion and homeostasis in chloroplasts in a light-dependent manner to modulate photosynthesis. Prevents excessive induction of non-photochemical quenching (NPQ) under continuous-light conditions. Indirectly promotes efficient inorganic carbon uptake into chloroplasts. The polypeptide is Potassium/proton antiporter CemA (Anthoceros angustus (Hornwort)).